Here is a 170-residue protein sequence, read N- to C-terminus: Crossover junction endodeoxyribonuclease RuvC (170 aa).

Catalysis depends on residues Asp-11, Glu-71, and Asp-143. Residues Asp-11, Glu-71, and Asp-143 each coordinate Mg(2+).

It belongs to the RuvC family. As to quaternary structure, homodimer which binds Holliday junction (HJ) DNA. The HJ becomes 2-fold symmetrical on binding to RuvC with unstacked arms; it has a different conformation from HJ DNA in complex with RuvA. In the full resolvosome a probable DNA-RuvA(4)-RuvB(12)-RuvC(2) complex forms which resolves the HJ. Mg(2+) is required as a cofactor.

The protein localises to the cytoplasm. It carries out the reaction Endonucleolytic cleavage at a junction such as a reciprocal single-stranded crossover between two homologous DNA duplexes (Holliday junction).. Its function is as follows. The RuvA-RuvB-RuvC complex processes Holliday junction (HJ) DNA during genetic recombination and DNA repair. Endonuclease that resolves HJ intermediates. Cleaves cruciform DNA by making single-stranded nicks across the HJ at symmetrical positions within the homologous arms, yielding a 5'-phosphate and a 3'-hydroxyl group; requires a central core of homology in the junction. The consensus cleavage sequence is 5'-(A/T)TT(C/G)-3'. Cleavage occurs on the 3'-side of the TT dinucleotide at the point of strand exchange. HJ branch migration catalyzed by RuvA-RuvB allows RuvC to scan DNA until it finds its consensus sequence, where it cleaves and resolves the cruciform DNA. This chain is Crossover junction endodeoxyribonuclease RuvC, found in Rhizobium meliloti (strain 1021) (Ensifer meliloti).